The chain runs to 128 residues: Cytochrome c-type biogenesis protein CcmE (128 aa).

Residues 1–8 (MQKRVRNR) lie on the Cytoplasmic side of the membrane. Residues 9-29 (LITIIICFCSAFLGIGIILYN) traverse the membrane as a helical; Signal-anchor for type II membrane protein segment. The Periplasmic portion of the chain corresponds to 30–128 (LENNIVFFLP…KHDENYRPTR (99 aa)). 2 residues coordinate heme: His120 and Tyr124.

The protein belongs to the CcmE/CycJ family.

It localises to the cell inner membrane. Functionally, heme chaperone required for the biogenesis of c-type cytochromes. Transiently binds heme delivered by CcmC and transfers the heme to apo-cytochromes in a process facilitated by CcmF and CcmH. The sequence is that of Cytochrome c-type biogenesis protein CcmE from Rickettsia canadensis (strain McKiel).